The sequence spans 162 residues: Thy-1 membrane glycoprotein (162 aa).

The signal sequence occupies residues 1 to 19 (MNPAISVALLLSVLQVSRG). Glutamine 20 bears the Pyrrolidone carboxylic acid mark. The 108-residue stretch at 20 to 127 (QKVTSLTACL…NKSISVYRDK (108 aa)) folds into the Ig-like V-type domain. Cystine bridges form between cysteine 28-cysteine 131 and cysteine 38-cysteine 105. N-linked (GlcNAc...) asparagine glycans are attached at residues asparagine 42, asparagine 94, and asparagine 118. Cysteine 131 carries GPI-anchor amidated cysteine; alternate lipidation. A propeptide spans 132–162 (GGISLLVQNTSWMLLLLLSLSLLQALDFISL) (removed in mature form).

It localises to the cell membrane. May play a role in cell-cell or cell-ligand interactions during synaptogenesis and other events in the brain. The chain is Thy-1 membrane glycoprotein (Thy1) from Mus musculus (Mouse).